A 357-amino-acid polypeptide reads, in one-letter code: Glucose-6-phosphatase catalytic subunit 1 (357 aa).

Topologically, residues 1 to 28 are lumenal; sequence MEKGMNVLHDFGIQSTHYLQVNYQDSQD. The helical transmembrane segment at 29 to 49 threads the bilayer; the sequence is WFILVSVIADLRNAFYVLFPI. Residues 50-60 lie on the Cytoplasmic side of the membrane; the sequence is WFHLREAVGIK. Residues 61–81 form a helical membrane-spanning segment; sequence LLWVAVIGDWLNLVFKWILFG. Residues 82 to 117 are Lumenal-facing; that stretch reads QRPYWWVMDTDYYSNASVPLIKQFPVTCETGPGSPS. Arginine 83 lines the substrate pocket. Asparagine 96 is a glycosylation site (N-linked (GlcNAc...) asparagine). Residues 118 to 138 traverse the membrane as a helical segment; sequence GHAMGTAGVYYVMVTSTLSMF. Histidine 119 functions as the Proton donor in the catalytic mechanism. The Cytoplasmic portion of the chain corresponds to 139 to 147; sequence RGKKKPTYR. The helical transmembrane segment at 148-168 threads the bilayer; the sequence is FRCLNVILWLGFWAVQLNVCL. The Lumenal segment spans residues 169-170; it reads SR. Arginine 170 is a substrate binding site. The helical transmembrane segment at 171 to 191 threads the bilayer; sequence IYLAAHFPHQVVAGVLSGIAV. Histidine 176 (nucleophile) is an active-site residue. The Cytoplasmic portion of the chain corresponds to 192–209; it reads AETFRHIQSIYNASLKKY. Residues 210–230 traverse the membrane as a helical segment; the sequence is FFITFFLLSFAIGFYLLLKGL. The Lumenal portion of the chain corresponds to 231–254; the sequence is GVDLLWTLEKARRWCERPEWVHID. Residues 255-275 form a helical membrane-spanning segment; sequence TTPFASLLKNVGTLFGLGLAL. Over 276 to 291 the chain is Cytoplasmic; sequence NSSMYRESCKGTLSKW. A helical transmembrane segment spans residues 292–312; that stretch reads FPFRLSCIVVSLILLHLFDSL. Topologically, residues 313–320 are lumenal; sequence KPPSQIEL. The chain crosses the membrane as a helical span at residues 321–341; the sequence is IFYVLSFCKSAAVPLASVSLI. At 342–357 the chain is on the cytoplasmic side; sequence PYCLARVLGQPDKKSL. Positions 354–357 match the Prevents secretion from ER motif; the sequence is KKSL.

It belongs to the glucose-6-phosphatase family.

Its subcellular location is the endoplasmic reticulum membrane. The enzyme catalyses D-glucose 6-phosphate + H2O = D-glucose + phosphate. It functions in the pathway carbohydrate biosynthesis; gluconeogenesis. Hydrolyzes glucose-6-phosphate to glucose in the endoplasmic reticulum. Forms with the glucose-6-phosphate transporter (SLC37A4/G6PT) the complex responsible for glucose production in the terminal step of glycogenolysis and gluconeogenesis. Hence, it is the key enzyme in homeostatic regulation of blood glucose levels. The protein is Glucose-6-phosphatase catalytic subunit 1 (G6PC1) of Felis catus (Cat).